We begin with the raw amino-acid sequence, 260 residues long: Phosphatidate cytidylyltransferase (260 aa).

The next 7 membrane-spanning stretches (helical) occupy residues 9 to 29 (IIAL…LMIF), 46 to 66 (MIKF…IIML), 70 to 90 (AGPW…FIVL), 102 to 122 (FMDA…FMFF), 130 to 150 (LHYI…AYLF), 172 to 192 (FIGG…FVDF), and 196 to 216 (VWIL…GDLV).

It belongs to the CDS family.

It localises to the cell membrane. It catalyses the reaction a 1,2-diacyl-sn-glycero-3-phosphate + CTP + H(+) = a CDP-1,2-diacyl-sn-glycerol + diphosphate. It participates in phospholipid metabolism; CDP-diacylglycerol biosynthesis; CDP-diacylglycerol from sn-glycerol 3-phosphate: step 3/3. This chain is Phosphatidate cytidylyltransferase (cdsA), found in Staphylococcus aureus (strain COL).